The following is a 204-amino-acid chain: Methyl-CpG-binding domain-containing protein 1 (204 aa).

The disordered stretch occupies residues 1 to 46 (MLPFPAMNLKKSRSENSSVASSGSKIEEQTEKSAEPTTIKVQKKAG). Polar residues predominate over residues 15 to 24 (ENSSVASSGS). The span at 25-34 (KIEEQTEKSA) shows a compositional bias: basic and acidic residues. The CW-type zinc-finger motif lies at 49–104 (GRSIDVFAVQCEKCMKWRKIDTQDEYEDIRSRVQEDPFFCKTKEGVSCEDVGDLNY). The MBD-associated domain (MAD) motif lies at 58–96 (QCEKCMKWRKIDTQDEYEDIRSRVQEDPFFCKTKEGVSC). Zn(2+)-binding residues include Cys-59, Cys-62, Cys-88, and Cys-96. The MBD domain maps to 110-180 (WVIDKPGLPR…GDFNFTVPKV (71 aa)).

Mostly expressed in flowers and buds.

The protein resides in the nucleus. Functionally, probable transcriptional regulator. The protein is Methyl-CpG-binding domain-containing protein 1 (MBD1) of Arabidopsis thaliana (Mouse-ear cress).